A 515-amino-acid polypeptide reads, in one-letter code: Zinc metalloproteinase-disintegrin BA-5A (515 aa).

A signal peptide spans 1-20 (MMQVLLVTICLAVFPYQGSS). Residues 21 to 193 (IILESGNVND…KEASQLVATS (173 aa)) constitute a propeptide that is removed on maturation. A Peptidase M12B domain is found at 203-399 (RYIKYFIVVD…YKPDCTLIRP (197 aa)). N263 is a glycosylation site (N-linked (GlcNAc...) asparagine). 11 disulfides stabilise this stretch: C314/C394, C354/C378, C356/C361, C410/C429, C421/C439, C423/C434, C433/C456, C447/C453, C452/C478, C465/C485, and C472/C497. Position 339 (H339) interacts with Zn(2+). E340 is a catalytic residue. 2 residues coordinate Zn(2+): H343 and H349. N-linked (GlcNAc...) asparagine glycosylation occurs at N377. The Disintegrin domain occupies 407-493 (PPVCGNDILE…DCPIDHFHRN (87 aa)). The D/ECD-tripeptide motif lies at 471 to 473 (ECD).

It belongs to the venom metalloproteinase (M12B) family. P-II subfamily. As to quaternary structure, monomer. The cofactor is Zn(2+). In terms of tissue distribution, expressed by the venom gland.

It localises to the secreted. In terms of biological role, snake venom zinc metalloprotease that possesses hemorrhagic activity and degrades alpha chain of fibrinogen (FGA). May inhibit alpha-2/beta-1 integrin (ITGA2/ITGB1). In Bitis arietans (African puff adder), this protein is Zinc metalloproteinase-disintegrin BA-5A.